A 221-amino-acid chain; its full sequence is Serine/arginine-rich splicing factor 9 (221 aa).

RRM domains follow at residues 14-89 and 111-187; these read GRIY…FPRT and FRVL…PERS. Residue K36 forms a Glycyl lysine isopeptide (Lys-Gly) (interchain with G-Cter in SUMO2) linkage. Residues 188 to 200 are interaction with SAFB1; that stretch reads TSYGYSRSRSGSR. At S189 the chain carries Phosphoserine. Residues 189–198 show a composition bias toward low complexity; it reads SYGYSRSRSG. Residues 189 to 221 are disordered; the sequence is SYGYSRSRSGSRGRDSPYQSRGSPHYFSPFRPY. At Y192 the chain carries Phosphotyrosine. Phosphoserine occurs at positions 193, 195, 204, 208, and 211. The residue at position 214 (Y214) is a Phosphotyrosine. At S216 the chain carries Phosphoserine.

It belongs to the splicing factor SR family. In terms of assembly, interacts with KHDRBS3. Interacts with HABP4. Interacts with NOL3/ARC/NOP30. Interacts with NSEP1/YB-1/YB1. Interacts with SAFB/SAFB1. Interacts with SRSF6/SFRS6. Interacts with TRA2B/SFRS10. Interacts with C1QBP. May also interact with DUSP11/PIR1. Post-translationally, extensively phosphorylated on serine residues in the RS domain. As to expression, expressed at high levels in the heart, kidney, pancreas and placenta, and at lower levels in the brain, liver, lung and skeletal muscle.

It localises to the nucleus. Functionally, plays a role in constitutive splicing and can modulate the selection of alternative splice sites. Represses the splicing of MAPT/Tau exon 10. The polypeptide is Serine/arginine-rich splicing factor 9 (SRSF9) (Homo sapiens (Human)).